We begin with the raw amino-acid sequence, 221 residues long: Toxin coregulated pilus biosynthesis protein P (221 aa).

Residues 5–109 constitute a DNA-binding region (ompR/PhoB-type); it reads RVIYQFPDNL…VKLQGYRINI (105 aa). The helical transmembrane segment at 143–163 threads the bilayer; the sequence is VVPYLVFSALYVALLPVIWWS.

The protein resides in the cell membrane. Its function is as follows. Involved in TCP pilus biogenesis. This Vibrio cholerae serotype O1 (strain ATCC 39315 / El Tor Inaba N16961) protein is Toxin coregulated pilus biosynthesis protein P (tcpP).